The chain runs to 358 residues: Phospho-N-acetylmuramoyl-pentapeptide-transferase (358 aa).

10 consecutive transmembrane segments (helical) span residues 13 to 47 (LFIL…SIFI), 81 to 101 (MGGI…TINL), 106 to 126 (LILL…DDYL), 148 to 168 (ISII…LITI), 171 to 191 (SWAI…LVGI), 201 to 221 (LDGL…TEIL), 228 to 248 (LFVF…FLKY), 255 to 275 (IFMG…IALL), 278 to 298 (SIFT…SVII), and 336 to 356 (IVEN…VLKI).

It belongs to the glycosyltransferase 4 family. MraY subfamily. Mg(2+) serves as cofactor.

It localises to the cell inner membrane. It catalyses the reaction UDP-N-acetyl-alpha-D-muramoyl-L-alanyl-gamma-D-glutamyl-meso-2,6-diaminopimeloyl-D-alanyl-D-alanine + di-trans,octa-cis-undecaprenyl phosphate = di-trans,octa-cis-undecaprenyl diphospho-N-acetyl-alpha-D-muramoyl-L-alanyl-D-glutamyl-meso-2,6-diaminopimeloyl-D-alanyl-D-alanine + UMP. Its pathway is cell wall biogenesis; peptidoglycan biosynthesis. Catalyzes the initial step of the lipid cycle reactions in the biosynthesis of the cell wall peptidoglycan: transfers peptidoglycan precursor phospho-MurNAc-pentapeptide from UDP-MurNAc-pentapeptide onto the lipid carrier undecaprenyl phosphate, yielding undecaprenyl-pyrophosphoryl-MurNAc-pentapeptide, known as lipid I. The chain is Phospho-N-acetylmuramoyl-pentapeptide-transferase from Prochlorococcus marinus (strain MIT 9301).